Reading from the N-terminus, the 400-residue chain is Formate-dependent phosphoribosylglycinamide formyltransferase (400 aa).

N(1)-(5-phospho-beta-D-ribosyl)glycinamide contacts are provided by residues 22 to 23 and E82; that span reads EL. Residues R115, K157, 162 to 167, 197 to 200, and E205 contribute to the ATP site; these read SSGKGQ and EGFI. The 196-residue stretch at 120 to 315 folds into the ATP-grasp domain; that stretch reads RLAAETLGVP…EFELHARAIL (196 aa). Mg(2+) contacts are provided by E274 and E286. N(1)-(5-phospho-beta-D-ribosyl)glycinamide is bound by residues D293, K362, and 369 to 370; that span reads RR.

This sequence belongs to the PurK/PurT family. Homodimer.

The enzyme catalyses N(1)-(5-phospho-beta-D-ribosyl)glycinamide + formate + ATP = N(2)-formyl-N(1)-(5-phospho-beta-D-ribosyl)glycinamide + ADP + phosphate + H(+). It functions in the pathway purine metabolism; IMP biosynthesis via de novo pathway; N(2)-formyl-N(1)-(5-phospho-D-ribosyl)glycinamide from N(1)-(5-phospho-D-ribosyl)glycinamide (formate route): step 1/1. Involved in the de novo purine biosynthesis. Catalyzes the transfer of formate to 5-phospho-ribosyl-glycinamide (GAR), producing 5-phospho-ribosyl-N-formylglycinamide (FGAR). Formate is provided by PurU via hydrolysis of 10-formyl-tetrahydrofolate. The polypeptide is Formate-dependent phosphoribosylglycinamide formyltransferase (Variovorax paradoxus (strain S110)).